A 287-amino-acid chain; its full sequence is ATP synthase gamma chain (287 aa).

It belongs to the ATPase gamma chain family. As to quaternary structure, F-type ATPases have 2 components, CF(1) - the catalytic core - and CF(0) - the membrane proton channel. CF(1) has five subunits: alpha(3), beta(3), gamma(1), delta(1), epsilon(1). CF(0) has three main subunits: a, b and c.

Its subcellular location is the cell inner membrane. In terms of biological role, produces ATP from ADP in the presence of a proton gradient across the membrane. The gamma chain is believed to be important in regulating ATPase activity and the flow of protons through the CF(0) complex. The polypeptide is ATP synthase gamma chain (Alkalilimnicola ehrlichii (strain ATCC BAA-1101 / DSM 17681 / MLHE-1)).